The primary structure comprises 221 residues: Putative N-acetylmannosamine-6-phosphate 2-epimerase (221 aa).

Belongs to the NanE family.

The enzyme catalyses an N-acyl-D-glucosamine 6-phosphate = an N-acyl-D-mannosamine 6-phosphate. It participates in amino-sugar metabolism; N-acetylneuraminate degradation; D-fructose 6-phosphate from N-acetylneuraminate: step 3/5. Functionally, converts N-acetylmannosamine-6-phosphate (ManNAc-6-P) to N-acetylglucosamine-6-phosphate (GlcNAc-6-P). This Clostridium perfringens (strain ATCC 13124 / DSM 756 / JCM 1290 / NCIMB 6125 / NCTC 8237 / Type A) protein is Putative N-acetylmannosamine-6-phosphate 2-epimerase.